The following is a 607-amino-acid chain: Acyl-coenzyme A thioesterase 11 (607 aa).

The transit peptide at 1–13 (MIQNVGNHLRRGL) directs the protein to the mitochondrion. Phosphoserine occurs at positions 15 and 25. A HotDog ACOT-type 1 domain is found at 43–155 (NPTEVQMSQL…LATFVARREI (113 aa)). CoA-binding positions include 91 to 93 (TAS), 120 to 122 (NSS), R181, and 271 to 273 (HFR). The HotDog ACOT-type 2 domain occupies 216 to 329 (EKTRVESVEL…FMTFVVLDAD (114 aa)). Positions 375–585 (LSVPWDPSNQ…GWNGKLAGGH (211 aa)) constitute an START domain.

Isoform 1 is predominantly expressed in skeletal muscle, liver, testis, stomach, spleen, lung and brain. Isoform 2 is predominantly expressed in kidney, uterus, hibernoma and white adipose tissue.

The protein resides in the mitochondrion matrix. It localises to the cytoplasm. The catalysed reaction is hexadecanoyl-CoA + H2O = hexadecanoate + CoA + H(+). It catalyses the reaction tetradecanoyl-CoA + H2O = tetradecanoate + CoA + H(+). The enzyme catalyses dodecanoyl-CoA + H2O = dodecanoate + CoA + H(+). It carries out the reaction butanoyl-CoA + H2O = butanoate + CoA + H(+). It participates in lipid metabolism; fatty acid metabolism. Its function is as follows. Has an acyl-CoA thioesterase activity with a preference for the long chain fatty acyl-CoA thioesters hexadecanoyl-CoA/palmitoyl-CoA and tetradecanoyl-CoA/myristoyl-CoA which are the main substrates in the mitochondrial beta-oxidation pathway. The polypeptide is Acyl-coenzyme A thioesterase 11 (ACOT11) (Homo sapiens (Human)).